The following is a 473-amino-acid chain: tRNA modification GTPase MnmE (473 aa).

Arginine 30, glutamate 95, and arginine 134 together coordinate (6S)-5-formyl-5,6,7,8-tetrahydrofolate. A TrmE-type G domain is found at 230 to 394 (GVSTVIAGRP…LKLLMASMVE (165 aa)). GTP-binding positions include 240 to 245 (NAGKST), 259 to 265 (SHMPGTT), and 284 to 287 (DTAG). Mg(2+)-binding residues include serine 244 and threonine 265. Lysine 473 contributes to the (6S)-5-formyl-5,6,7,8-tetrahydrofolate binding site.

This sequence belongs to the TRAFAC class TrmE-Era-EngA-EngB-Septin-like GTPase superfamily. TrmE GTPase family. In terms of assembly, homodimer. Heterotetramer of two MnmE and two MnmG subunits. It depends on K(+) as a cofactor.

It localises to the cytoplasm. Functionally, exhibits a very high intrinsic GTPase hydrolysis rate. Involved in the addition of a carboxymethylaminomethyl (cmnm) group at the wobble position (U34) of certain tRNAs, forming tRNA-cmnm(5)s(2)U34. In Chlorobium luteolum (strain DSM 273 / BCRC 81028 / 2530) (Pelodictyon luteolum), this protein is tRNA modification GTPase MnmE.